The following is a 359-amino-acid chain: 3-dehydroquinate synthase (359 aa).

NAD(+) is bound by residues 69-74 (DAEDGK), 103-107 (GAVTD), 127-128 (TT), Lys-140, and Lys-149. Glu-182, His-244, and His-260 together coordinate Zn(2+).

This sequence belongs to the sugar phosphate cyclases superfamily. Dehydroquinate synthase family. NAD(+) is required as a cofactor. The cofactor is Co(2+). It depends on Zn(2+) as a cofactor.

The protein localises to the cytoplasm. It carries out the reaction 7-phospho-2-dehydro-3-deoxy-D-arabino-heptonate = 3-dehydroquinate + phosphate. Its pathway is metabolic intermediate biosynthesis; chorismate biosynthesis; chorismate from D-erythrose 4-phosphate and phosphoenolpyruvate: step 2/7. Its function is as follows. Catalyzes the conversion of 3-deoxy-D-arabino-heptulosonate 7-phosphate (DAHP) to dehydroquinate (DHQ). This Corynebacterium pseudotuberculosis (strain C231) protein is 3-dehydroquinate synthase.